Consider the following 746-residue polypeptide: SNF-related serine/threonine-protein kinase (746 aa).

The Protein kinase domain occupies 16–269 (YDLDKTLGRG…LEEIESHPWL (254 aa)). Residues 22–30 (LGRGHFAVV) and K45 each bind ATP. D139 functions as the Proton acceptor in the catalytic mechanism. A Phosphoserine modification is found at S162. T173 carries the phosphothreonine; by LKB1 modification. Positions 291 to 334 (SEEEHNSIIQRMVLGDIADRDAIVEALETNRYNHITATYFLLAE) constitute a UBA domain. S362, S390, S482, S495, and S518 each carry phosphoserine. The disordered stretch occupies residues 383 to 414 (SHATVPQSPARAGDSVLNGHRSKGLCDPAKKD). Residues 494–503 (ESDDEFDMDE) are compositionally biased toward acidic residues. The disordered stretch occupies residues 494-638 (ESDDEFDMDE…SSSSSPASAA (145 aa)). The span at 522 to 532 (VHKRYHRRKSQ) shows a compositional bias: basic residues. Residues 533–542 (GRGSSCSSSE) are compositionally biased toward low complexity. R534 carries the post-translational modification Omega-N-methylarginine. Residues 549–558 (ESRRRLDKDS) show a composition bias toward basic and acidic residues. Gly residues-rich tracts occupy residues 575-592 (GSEGDGGGQSKPSGGGGV) and 600-614 (QGTGGSGQGGSGGTP). The span at 615 to 638 (SGTAGSSRRCAGPDSSSSSPASAA) shows a compositional bias: low complexity.

This sequence belongs to the protein kinase superfamily. CAMK Ser/Thr protein kinase family. The cofactor is Mg(2+). Post-translationally, autophosphorylated. Phosphorylation on Thr-173 by STK11/LKB1 in complex with STE20-related adapter-alpha (STRADA) pseudo kinase and CAB39. In terms of tissue distribution, ubiquitously expressed in all tissues examined with highest levels in the brain and testis. Strongly expressed in the pyramidal and granule neurons of the hippocampus and also in the cerebellum.

The protein resides in the nucleus. It carries out the reaction L-seryl-[protein] + ATP = O-phospho-L-seryl-[protein] + ADP + H(+). The catalysed reaction is L-threonyl-[protein] + ATP = O-phospho-L-threonyl-[protein] + ADP + H(+). With respect to regulation, activated by phosphorylation on Thr-173. Its function is as follows. May play a role in hematopoietic cell proliferation or differentiation. Potential mediator of neuronal apoptosis. The sequence is that of SNF-related serine/threonine-protein kinase from Rattus norvegicus (Rat).